The chain runs to 99 residues: Large ribosomal subunit protein uL23 (99 aa).

Belongs to the universal ribosomal protein uL23 family. In terms of assembly, part of the 50S ribosomal subunit. Contacts protein L29, and trigger factor when it is bound to the ribosome.

Functionally, one of the early assembly proteins it binds 23S rRNA. One of the proteins that surrounds the polypeptide exit tunnel on the outside of the ribosome. Forms the main docking site for trigger factor binding to the ribosome. The protein is Large ribosomal subunit protein uL23 of Ectopseudomonas mendocina (strain ymp) (Pseudomonas mendocina).